Reading from the N-terminus, the 325-residue chain is Glutarate 2-hydroxylase (325 aa).

Residues His160, Asp162, and His292 each contribute to the Fe cation site.

The protein belongs to the glutarate hydroxylase family. Homotetramer. It depends on Fe(2+) as a cofactor.

It carries out the reaction glutarate + 2-oxoglutarate + O2 = (S)-2-hydroxyglutarate + succinate + CO2. It functions in the pathway amino-acid degradation. Functionally, acts as an alpha-ketoglutarate-dependent dioxygenase catalyzing hydroxylation of glutarate (GA) to L-2-hydroxyglutarate (L2HG). Functions in a L-lysine degradation pathway that proceeds via cadaverine, glutarate and L-2-hydroxyglutarate. This Klebsiella pneumoniae (strain 342) protein is Glutarate 2-hydroxylase.